A 105-amino-acid polypeptide reads, in one-letter code: MPATVAELQAEIAAWIHPLNPDRRPGGTIAKLLEEIGELIASDRAHDPLEVADVLILALDLATLLGVDVTEAIRAKLAINRARSWARADNGAMRHIPGSDTPSFP.

Belongs to the Caudovirales dATP/dGTP diphosphohydrolase family. It depends on Co(2+) as a cofactor.

It catalyses the reaction dGTP + H2O = dGMP + diphosphate + H(+). The catalysed reaction is dATP + H2O = dAMP + diphosphate + H(+). It functions in the pathway purine metabolism. Functionally, catalyzes the hydrolysis of dGTP into dGMP, which is needed among other for the first step of biosynthesis of dZTP (2-amino-2'-deoxyadenosine-5'-triphosphate). This Cyanophage S-2L (Cyanobacteria phage S-2L) protein is dATP/dGTP diphosphohydrolase.